Reading from the N-terminus, the 430-residue chain is Pre-mRNA-processing protein 45 (430 aa).

The segment covering 1–26 (MSFRTLSSLLPSPQNSEVSESSAFSR) has biased composition (polar residues). Disordered regions lie at residues 1-28 (MSFR…SRQS), 280-299 (MERN…NKMS), and 370-430 (PTTG…PHTS).

Belongs to the SNW family. As to quaternary structure, associated with the spliceosome.

The protein resides in the nucleus. In terms of biological role, involved in pre-mRNA splicing. The sequence is that of Pre-mRNA-processing protein 45 (PRP45) from Kluyveromyces lactis (strain ATCC 8585 / CBS 2359 / DSM 70799 / NBRC 1267 / NRRL Y-1140 / WM37) (Yeast).